The following is a 593-amino-acid chain: Meiosis-specific APC/C activator protein AMA1 (593 aa).

Residues 1-11 (MATPHLYHRYN) are compositionally biased toward basic residues. The interval 1-26 (MATPHLYHRYNSKSSNKNINSSGNST) is disordered. Residues 12-25 (SKSSNKNINSSGNS) show a composition bias toward low complexity. A C-box motif is present at residues 29-35 (DRFIPKS). Residues 94–109 (SSISSSSESQVTRSGS) show a composition bias toward low complexity. Residues 94 to 125 (SSISSSSESQVTRSGSARASRNDYSKLTKEQK) form a disordered region. Residues 113–125 (SRNDYSKLTKEQK) show a composition bias toward basic and acidic residues. WD repeat units follow at residues 226 to 264 (RNDFYSNLISWSRTTNNVLVGLGCSVYIWSEKEGAVSIL), 271 to 310 (EKRDLVTCVSFCPYNTYFIVGTKFGRILLYDQKEFFHSSN), 323 to 364 (ESFK…FPIK), 388 to 427 (AQAQQVCGISLNEHANLLAVGGNDNSCSLWDISDLDKPIK), 432 to 474 (PHKA…LLDE), and 525 to 564 (PNPLRVLSAVISPSSMAICVATNDETIRFYELWNDKEEII).

Belongs to the WD repeat CDC20/Fizzy family. Interacts with CDC16.

Activator protein that regulates the ubiquitin ligase activity and substrate specificity of the anaphase promoting complex/cyclosome (APC/C). Required for the ubiquitination and subsequent degradation of the B-type cyclin CLB1 by the APC/C complex during meiosis. Required for meiosis I, late meiotic gene expression and spore wall assembly. The protein is Meiosis-specific APC/C activator protein AMA1 (AMA1) of Saccharomyces cerevisiae (strain ATCC 204508 / S288c) (Baker's yeast).